We begin with the raw amino-acid sequence, 589 residues long: BTB/POZ domain and ankyrin repeat-containing protein NPR3 (589 aa).

The interval 1 to 25 (METSTISFSSSSPPSPPPPQPAPGD) is disordered. Residues 13–22 (PPSPPPPQPA) show a composition bias toward pro residues. In terms of domain architecture, BTB spans 52-137 (AEIVLASGGG…LYTGRLRSAP (86 aa)). Residues 140-154 (AAACLDDGCSHDACR) form a C2HC NPR-type zinc finger. Residues Cys-143, Cys-148, His-150, and Cys-153 each contribute to the Zn(2+) site. 3 ANK repeats span residues 260-290 (KRVR…TLDD), 292-319 (FAIH…NVNL), and 323-352 (SGYT…SVLE). The interval 382-521 (ERSKAYLCIG…LDKFLNEEST (140 aa)) is salicylic acid-binding core (SBC). Arg-433 lines the salicylate pocket. The segment at 555–589 (DKAAGAAISSSTSASSSPRYETKLRPGNKKGKLSR) is disordered. The segment covering 558 to 571 (AGAAISSSTSASSS) has biased composition (low complexity). The span at 580–589 (PGNKKGKLSR) shows a compositional bias: basic residues.

This sequence belongs to the plant 'ANKYRIN-BTB/POZ' family. 'NPR1-like' subfamily. Interacts with TGA2.1, TGA2.2, TGA2.3, LG2, TGAL1, TGAL4, NRR, RH1, RH2 and RH3.

It is found in the nucleus. It functions in the pathway protein modification; protein ubiquitination. Functionally, salicylic acid (SA)-binding substrate-specific adapter of an E3 ubiquitin-protein ligase complex (CUL3-RBX1-BTB) which mediates the ubiquitination and subsequent proteasomal degradation of target proteins. Involved in defense response against the bacterial blight disease caused by Xanthomonas oryzae pv. oryzae (Xoo). Plants expressing an NPR3/NH3 transgene driven by its native promoter show enhanced resistance to the Xoo pathogen, and exhibit elevated sensitivity to benzothiadiazole (BTH) treatment and enhanced induction of defense-related genes upon treatment with BTH. Intriguingly, constitutive over-expression of NPR3/NH3 with a ubiquitin promoter does not confer disease resistance to Xoo. The sequence is that of BTB/POZ domain and ankyrin repeat-containing protein NPR3 from Oryza sativa subsp. japonica (Rice).